We begin with the raw amino-acid sequence, 199 residues long: MTSGRTGILGGSFDPIHYGHLAIAEEVRVLLRLNRVLIIPAREQPLKPGGSVASPAHRLAMARLACADNPFFEVSRIEIDRPDPSYTSVTLQLLHEQGLNDLYLILGIDSVADLPRWREVRRILELAHIVGVARPGAAVDLSHLSQVLPQLPARLIEIDGPRLDISSTDLRQRVAQGRPIRYQTPDAVVAYIEANGLYR.

This sequence belongs to the NadD family.

The enzyme catalyses nicotinate beta-D-ribonucleotide + ATP + H(+) = deamido-NAD(+) + diphosphate. Its pathway is cofactor biosynthesis; NAD(+) biosynthesis; deamido-NAD(+) from nicotinate D-ribonucleotide: step 1/1. Its function is as follows. Catalyzes the reversible adenylation of nicotinate mononucleotide (NaMN) to nicotinic acid adenine dinucleotide (NaAD). This Roseiflexus castenholzii (strain DSM 13941 / HLO8) protein is Probable nicotinate-nucleotide adenylyltransferase.